Consider the following 250-residue polypeptide: Dihydroorotate dehydrogenase B (NAD(+)), electron transfer subunit (250 aa).

In terms of domain architecture, FAD-binding FR-type spans Met-1–Leu-94. Residues Arg-45–Ser-48, Ile-62–Arg-64, and Gly-69–Thr-70 each bind FAD. [2Fe-2S] cluster is bound by residues Cys-214, Cys-219, Cys-222, and Cys-237.

It belongs to the PyrK family. As to quaternary structure, heterotetramer of 2 PyrK and 2 PyrD type B subunits. [2Fe-2S] cluster is required as a cofactor. The cofactor is FAD.

It participates in pyrimidine metabolism; UMP biosynthesis via de novo pathway; orotate from (S)-dihydroorotate (NAD(+) route): step 1/1. In terms of biological role, responsible for channeling the electrons from the oxidation of dihydroorotate from the FMN redox center in the PyrD type B subunit to the ultimate electron acceptor NAD(+). This is Dihydroorotate dehydrogenase B (NAD(+)), electron transfer subunit from Streptococcus pneumoniae serotype 4 (strain ATCC BAA-334 / TIGR4).